The chain runs to 301 residues: MSTHQTHLKQLEAESIQIMREVAAEFDNPVMLYSVGKDSSVLLHLARKAFYPGKIPFPLMHVDTNWKFKEMIEFRDQMAEKHGFDLIVHKNPRGLEMNISPFTHGSAKHTDIMKTEGLKQALDAHGFDAAFGGARRDEEKSRAKERVYSFRDNKHRWDPKNQRPELWNIYNGKVDKGESIRVFPLSNWTELDIWQYIYLEGIEIPSLYLATERPVVERDGTLIMVDDERMPLEADEDVQNKMVRFRTLGCYPLTGAVESQAQTLPEIIQEMLLCTTSERQGRVIDNDSAGSMEKKKIEGYF.

It belongs to the PAPS reductase family. CysD subfamily. As to quaternary structure, heterodimer composed of CysD, the smaller subunit, and CysN.

The enzyme catalyses sulfate + ATP + H(+) = adenosine 5'-phosphosulfate + diphosphate. It participates in sulfur metabolism; hydrogen sulfide biosynthesis; sulfite from sulfate: step 1/3. In terms of biological role, with CysN forms the ATP sulfurylase (ATPS) that catalyzes the adenylation of sulfate producing adenosine 5'-phosphosulfate (APS) and diphosphate, the first enzymatic step in sulfur assimilation pathway. APS synthesis involves the formation of a high-energy phosphoric-sulfuric acid anhydride bond driven by GTP hydrolysis by CysN coupled to ATP hydrolysis by CysD. The sequence is that of Sulfate adenylyltransferase subunit 2 from Shewanella woodyi (strain ATCC 51908 / MS32).